The chain runs to 245 residues: Sugar fermentation stimulation protein homolog (245 aa).

It belongs to the SfsA family.

The protein is Sugar fermentation stimulation protein homolog of Yersinia pseudotuberculosis serotype I (strain IP32953).